Consider the following 124-residue polypeptide: Mediator of RNA polymerase II transcription subunit 31 (124 aa).

Belongs to the Mediator complex subunit 31 family. In terms of assembly, component of the Mediator complex.

It is found in the nucleus. Its function is as follows. Component of the Mediator complex, a coactivator involved in the regulated transcription of nearly all RNA polymerase II-dependent genes. Mediator functions as a bridge to convey information from gene-specific regulatory proteins to the basal RNA polymerase II transcription machinery. Mediator is recruited to promoters by direct interactions with regulatory proteins and serves as a scaffold for the assembly of a functional preinitiation complex with RNA polymerase II and the general transcription factors. This is Mediator of RNA polymerase II transcription subunit 31 (SOH1) from Kluyveromyces lactis (strain ATCC 8585 / CBS 2359 / DSM 70799 / NBRC 1267 / NRRL Y-1140 / WM37) (Yeast).